Here is a 433-residue protein sequence, read N- to C-terminus: Type I acyl-CoA thioesterase mpaH (433 aa).

Residues 58–246 form an abhydrolase domain region; sequence HGVGLPKELY…IKARFGTTAD (189 aa). Val-60 provides a ligand contact to substrate. Catalysis depends on Ser-139, which acts as the Nucleophile. Phe-140 contacts substrate. Active-site residues include Asp-163 and His-365.

This sequence belongs to the AB hydrolase superfamily. MpaH hydrolase family. As to quaternary structure, homodimer.

It is found in the peroxisome matrix. It carries out the reaction mycophenolyl-CoA + H2O = mycophenolate + CoA + H(+). The protein operates within secondary metabolite biosynthesis; terpenoid biosynthesis. Type I acyl-CoA thioesterase; part of the gene cluster that mediates the biosynthesis of mycophenolic acid (MPA), the first isolated antibiotic natural product in the world obtained from a culture of Penicillium brevicompactum in 1893. MpaH acts as a peroxisomal acyl-CoA hydrolase that converts MPA-CoA into the final product MPA. The first step of the pathway is the synthesis of 5-methylorsellinic acid (5MOA) by the cytosolic polyketide synthase mpaC. 5MOA is then converted to the phthalide compound 5,7-dihydroxy-4,6-dimethylphthalide (DHMP) by the endoplasmic reticulum-bound cytochrome P450 monooxygenase mpaDE. MpaDE first catalyzes hydroxylation of 5-MOA to 4,6-dihydroxy-2-(hydroxymethyl)-3-methylbenzoic acid (DHMB). MpaDE then acts as a lactone synthase that catalyzes the ring closure to convert DHMB into DHMP. The next step is the prenylation of DHMP by the Golgi apparatus-associated prenyltransferase mpaA to yield farnesyl-DHMP (FDHMP). The ER-bound oxygenase mpaB then mediates the oxidative cleavage the C19-C20 double bond in FDHMP to yield FDHMP-3C via a mycophenolic aldehyde intermediate. The O-methyltransferase mpaG catalyzes the methylation of FDHMP-3C to yield MFDHMP-3C. After the cytosolic methylation of FDHMP-3C, MFDHMP-3C enters into peroxisomes probably via free diffusion due to its low molecular weight. Upon a peroxisomal CoA ligation reaction, catalyzed by a beta-oxidation component enzyme acyl-CoA ligase ACL891, MFDHMP-3C-CoA would then be restricted to peroxisomes for the following beta-oxidation pathway steps. The peroxisomal beta-oxidation machinery than converts MFDHMP-3C-CoA into MPA_CoA, via a beta-oxidation chain-shortening process. Finally mpaH acts as a peroxisomal acyl-CoA hydrolase with high substrate specificity toward MPA-CoA to release the final product MPA. The sequence is that of Type I acyl-CoA thioesterase mpaH from Penicillium brevicompactum.